Reading from the N-terminus, the 352-residue chain is S-adenosylmethionine:tRNA ribosyltransferase-isomerase (352 aa).

This sequence belongs to the QueA family. Monomer.

It localises to the cytoplasm. The catalysed reaction is 7-aminomethyl-7-carbaguanosine(34) in tRNA + S-adenosyl-L-methionine = epoxyqueuosine(34) in tRNA + adenine + L-methionine + 2 H(+). Its pathway is tRNA modification; tRNA-queuosine biosynthesis. Its function is as follows. Transfers and isomerizes the ribose moiety from AdoMet to the 7-aminomethyl group of 7-deazaguanine (preQ1-tRNA) to give epoxyqueuosine (oQ-tRNA). The polypeptide is S-adenosylmethionine:tRNA ribosyltransferase-isomerase (Allorhizobium ampelinum (strain ATCC BAA-846 / DSM 112012 / S4) (Agrobacterium vitis (strain S4))).